A 154-amino-acid polypeptide reads, in one-letter code: 17 kDa A-type inclusion protein (154 aa).

The stretch at 17-85 forms a coiled coil; it reads QKDCSDKLDR…YKRELERDRY (69 aa). Residues 88-154 are disordered; sequence SRYLTSSSDP…DVEPEHPPAF (67 aa).

This is 17 kDa A-type inclusion protein from Bos taurus (Bovine).